Reading from the N-terminus, the 448-residue chain is Guanine deaminase (448 aa).

Zn(2+) contacts are provided by histidine 74 and histidine 76. Substrate-binding positions include 76–79, 204–205, 231–234, and aspartate 319; these read HAPQ, RF, and HISE. Residues histidine 231 and aspartate 319 each coordinate Zn(2+).

Belongs to the metallo-dependent hydrolases superfamily. ATZ/TRZ family. Zn(2+) is required as a cofactor.

It catalyses the reaction guanine + H2O + H(+) = xanthine + NH4(+). The protein operates within purine metabolism; guanine degradation; xanthine from guanine: step 1/1. Strongly inhibited by p-chloromercuribenzoate (PCMB). Potassium cyanide (KCN) strongly inhibits activity towards 7,8-dihydropterin but has almost no effect on activity towards guanine. Pterin inhibits activity towards guanine but has little effect on activity towards 7,8-dihydropterin. In terms of biological role, catalyzes the hydrolytic deamination of guanine, producing xanthine and ammonia. Also has 7,8-dihydropterin deaminase activity, which plays a role in synthesis of the red eye pigment aurodrosopterin. This is Guanine deaminase from Drosophila melanogaster (Fruit fly).